The following is a 526-amino-acid chain: Keratin, type I cytoskeletal 10 (526 aa).

The span at 1–15 (MSVRYSSSKQYSSSR) shows a compositional bias: low complexity. Positions 1–29 (MSVRYSSSKQYSSSRSGGGGGGGSSLRIS) are disordered. Positions 1 to 126 (MSVRYSSSKQ…FGDGGLISGN (126 aa)) are head. 6 positions are modified to phosphoserine: Ser14, Ser16, Ser34, Ser45, Ser48, and Ser151. The interval 127–162 (QKITMQNLNDRLASYLDKVRALEESNYELEVKIKEW) is coil 1A. An IF rod domain is found at 127-441 (QKITMQNLND…SLLEGEGSSG (315 aa)). The interval 163 to 183 (YEKYGNSRQREPRDYSKYYQT) is linker 1. Residues 184-275 (IDDLKNQIFN…KNHEEEMRDL (92 aa)) form a coil 1B region. The segment at 276 to 298 (QNVSTGDVNVEMNAAPGVDLTEL) is linker 12. The tract at residues 299 to 437 (LNNMRSQYEQ…QTYRSLLEGE (139 aa)) is coil 2. Residues 438–526 (GSSGGGSYGG…GESSSKGPRY (89 aa)) form a tail region. Over residues 458-505 (GGGGYGGGSSSGGYGGGSSSGGGHGGSSGGSYGGGSSSGGGHGGGSSS) the composition is skewed to gly residues. A disordered region spans residues 458-526 (GGGGYGGGSS…GESSSKGPRY (69 aa)). Residues 506–526 (GGHKSTTTGSVGESSSKGPRY) are compositionally biased toward low complexity.

Belongs to the intermediate filament family. Heterotetramer of two type I and two type II keratins. Heterodimer with KRT1. Two heterodimers of KRT1 and KRT10 form a heterotetramer. The KRT10 subunit in the heterotetramer is probably disulfide-linked.

It is found in the secreted. The protein localises to the extracellular space. Its subcellular location is the cell surface. The protein resides in the cytoplasm. Functionally, plays a role in the establishment of the epidermal barrier on plantar skin. Involved in the maintenance of cell layer development and keratin filament bundles in suprabasal cells of the epithelium. This is Keratin, type I cytoskeletal 10 (KRT10) from Bos taurus (Bovine).